Here is a 223-residue protein sequence, read N- to C-terminus: Pyridoxine/pyridoxamine 5'-phosphate oxidase (223 aa).

Substrate contacts are provided by residues 13–16 and Lys-73; that span reads RKNY. FMN contacts are provided by residues 68–73, 83–84, Lys-90, and Gln-112; these read RIVLLK and YT. Residues Tyr-130, Arg-134, and Ser-138 each coordinate substrate. FMN contacts are provided by residues 147-148 and Trp-193; that span reads QS. Substrate is bound at residue 199–201; it reads RLH. Arg-203 contacts FMN.

This sequence belongs to the pyridoxamine 5'-phosphate oxidase family. As to quaternary structure, homodimer. Requires FMN as cofactor.

It catalyses the reaction pyridoxamine 5'-phosphate + O2 + H2O = pyridoxal 5'-phosphate + H2O2 + NH4(+). It carries out the reaction pyridoxine 5'-phosphate + O2 = pyridoxal 5'-phosphate + H2O2. It functions in the pathway cofactor metabolism; pyridoxal 5'-phosphate salvage; pyridoxal 5'-phosphate from pyridoxamine 5'-phosphate: step 1/1. Its pathway is cofactor metabolism; pyridoxal 5'-phosphate salvage; pyridoxal 5'-phosphate from pyridoxine 5'-phosphate: step 1/1. Functionally, catalyzes the oxidation of either pyridoxine 5'-phosphate (PNP) or pyridoxamine 5'-phosphate (PMP) into pyridoxal 5'-phosphate (PLP). The polypeptide is Pyridoxine/pyridoxamine 5'-phosphate oxidase (Rhodopirellula baltica (strain DSM 10527 / NCIMB 13988 / SH1)).